The sequence spans 21 residues: IVGGTAADISQFPHQLSLQTT.

This sequence belongs to the peptidase S1 family.

The protein localises to the secreted. It is found in the extracellular space. The enzyme catalyses Preferential cleavage: Arg-|-Xaa, Lys-|-Xaa.. In Apis mellifera scutellata (Africanized honey bee), this protein is Trypsin.